Consider the following 154-residue polypeptide: 6,7-dimethyl-8-ribityllumazine synthase (154 aa).

Residues F26, 60–62, and 84–86 contribute to the 5-amino-6-(D-ribitylamino)uracil site; these read ALE and CII. 89 to 90 lines the (2S)-2-hydroxy-3-oxobutyl phosphate pocket; that stretch reads QT. H92 acts as the Proton donor in catalysis. N117 is a 5-amino-6-(D-ribitylamino)uracil binding site. Residue R131 coordinates (2S)-2-hydroxy-3-oxobutyl phosphate.

This sequence belongs to the DMRL synthase family.

The enzyme catalyses (2S)-2-hydroxy-3-oxobutyl phosphate + 5-amino-6-(D-ribitylamino)uracil = 6,7-dimethyl-8-(1-D-ribityl)lumazine + phosphate + 2 H2O + H(+). Its pathway is cofactor biosynthesis; riboflavin biosynthesis; riboflavin from 2-hydroxy-3-oxobutyl phosphate and 5-amino-6-(D-ribitylamino)uracil: step 1/2. In terms of biological role, catalyzes the formation of 6,7-dimethyl-8-ribityllumazine by condensation of 5-amino-6-(D-ribitylamino)uracil with 3,4-dihydroxy-2-butanone 4-phosphate. This is the penultimate step in the biosynthesis of riboflavin. The sequence is that of 6,7-dimethyl-8-ribityllumazine synthase from Verminephrobacter eiseniae (strain EF01-2).